We begin with the raw amino-acid sequence, 325 residues long: NADH-quinone oxidoreductase subunit H (325 aa).

9 consecutive transmembrane segments (helical) span residues 11–31 (ILLS…CGAF), 50–69 (NRVG…KMFF), 81–101 (VIFT…FAIV), 114–134 (IGIL…LFAG), 154–174 (VSYE…AGSF), 186–206 (LWNV…GVAV), 237–257 (FFVG…TLFF), 265–285 (LPPF…FILI), and 304–324 (VCLP…LWQA).

Belongs to the complex I subunit 1 family. As to quaternary structure, NDH-1 is composed of 13 different subunits. Subunits NuoA, H, J, K, L, M, N constitute the membrane sector of the complex.

It localises to the cell inner membrane. It carries out the reaction a quinone + NADH + 5 H(+)(in) = a quinol + NAD(+) + 4 H(+)(out). Functionally, NDH-1 shuttles electrons from NADH, via FMN and iron-sulfur (Fe-S) centers, to quinones in the respiratory chain. The immediate electron acceptor for the enzyme in this species is believed to be ubiquinone. Couples the redox reaction to proton translocation (for every two electrons transferred, four hydrogen ions are translocated across the cytoplasmic membrane), and thus conserves the redox energy in a proton gradient. This subunit may bind ubiquinone. In Salmonella arizonae (strain ATCC BAA-731 / CDC346-86 / RSK2980), this protein is NADH-quinone oxidoreductase subunit H.